The following is a 219-amino-acid chain: MDQLEMKKLAAQAALEYVKADTIVGVGSGSTVNCFIEALGTIKNKIQGAVAASKASEELLRKQGIEVFNANDVSSLDIYVDGADEINPQKMMIKGGGAALTREKIVAALAKKFICIVDSSKQVDVLGSTFPLPVEVIPMARSQVGRKLVALGGAPEYREGVVTDNGNVILDVHNFSILNPVEMEKELNNVAGVATNGIFALRGADVVIVGTPEGAKIID.

Residues 28-31 (SGST), 81-84 (DGAD), and 94-97 (KGGG) contribute to the substrate site. The active-site Proton acceptor is the E103. K121 is a substrate binding site.

The protein belongs to the ribose 5-phosphate isomerase family. In terms of assembly, homodimer.

It carries out the reaction aldehydo-D-ribose 5-phosphate = D-ribulose 5-phosphate. Its pathway is carbohydrate degradation; pentose phosphate pathway; D-ribose 5-phosphate from D-ribulose 5-phosphate (non-oxidative stage): step 1/1. In terms of biological role, catalyzes the reversible conversion of ribose-5-phosphate to ribulose 5-phosphate. The sequence is that of Ribose-5-phosphate isomerase A from Haemophilus influenzae (strain PittEE).